We begin with the raw amino-acid sequence, 562 residues long: Arginine--tRNA ligase (562 aa).

A 'HIGH' region motif is present at residues 126–136; the sequence is ANPTGPLNVGH.

Belongs to the class-I aminoacyl-tRNA synthetase family. As to quaternary structure, monomer.

Its subcellular location is the cytoplasm. It carries out the reaction tRNA(Arg) + L-arginine + ATP = L-arginyl-tRNA(Arg) + AMP + diphosphate. This chain is Arginine--tRNA ligase, found in Salinibacter ruber (strain DSM 13855 / M31).